A 573-amino-acid polypeptide reads, in one-letter code: MEPAEDSLGATIQPPELVRVPRGRSLRILLGLRGALSPDVRREAAALVALAGPVFLAQLMIFLISIVSSIFCGHLGKVELDAVTLAVSVVNVTGISVGTGLASACDTLMSQSFGGKNLKRVGVILQRGILILLLCCFPCWAIFLNTERLLLLLRQDPDVARLAQVYVMICIPALPAAFLFQLQTRYLQSQGIIMPQVIVGIAANVVNVGMNAFLLYALDLGVVGSAWANTTSQFFLSALLFLYVWWKRIHIHTWGGWTRECFQEWSSYTRLAIPSMFMVCIEWWTFEIGTFLAGLVNVTELGAQAVIYELASVAYMVPFGFGVAASVRVGNALGAGNADQARCSCTTVLLCAGVCALLVGILLAALKDVVAYIFTNDKDIISLVSQVMPIFAPFHLFDALAGTCGGVLRGTGKQKIGAVLNTIGYYGFGFPIGVSLMFAAKLGIIGLWAGLIVCVSFQAFSYLIYILRTNWSRVAEQAQVRAGLKSTKELIPTPADLPILEREVMDGVILPDIIRPESQTGQLVVEENSQCAVPTVGEVLTGRQLVFYRGMALTVSVAVLIAGIVVRVFNDRG.

Topologically, residues 1–46 (MEPAEDSLGATIQPPELVRVPRGRSLRILLGLRGALSPDVRREAAA) are cytoplasmic. The helical transmembrane segment at 47–67 (LVALAGPVFLAQLMIFLISIV) threads the bilayer. At 68–81 (SSIFCGHLGKVELD) the chain is on the extracellular side. A helical transmembrane segment spans residues 82 to 102 (AVTLAVSVVNVTGISVGTGLA). Topologically, residues 103 to 122 (SACDTLMSQSFGGKNLKRVG) are cytoplasmic. Residues 123–143 (VILQRGILILLLCCFPCWAIF) form a helical membrane-spanning segment. The Extracellular segment spans residues 144 to 161 (LNTERLLLLLRQDPDVAR). A helical membrane pass occupies residues 162–182 (LAQVYVMICIPALPAAFLFQL). The Cytoplasmic segment spans residues 183–196 (QTRYLQSQGIIMPQ). The helical transmembrane segment at 197–217 (VIVGIAANVVNVGMNAFLLYA) threads the bilayer. The Extracellular segment spans residues 218–225 (LDLGVVGS). The chain crosses the membrane as a helical span at residues 226–246 (AWANTTSQFFLSALLFLYVWW). Over 247–266 (KRIHIHTWGGWTRECFQEWS) the chain is Cytoplasmic. Residues 267-286 (SYTRLAIPSMFMVCIEWWTF) traverse the membrane as a helical segment. Residues 287 to 304 (EIGTFLAGLVNVTELGAQ) lie on the Extracellular side of the membrane. The helical transmembrane segment at 305 to 325 (AVIYELASVAYMVPFGFGVAA) threads the bilayer. The Cytoplasmic portion of the chain corresponds to 326-345 (SVRVGNALGAGNADQARCSC). A helical transmembrane segment spans residues 346–366 (TTVLLCAGVCALLVGILLAAL). Residues 367-379 (KDVVAYIFTNDKD) are Extracellular-facing. A helical transmembrane segment spans residues 380–400 (IISLVSQVMPIFAPFHLFDAL). Residues 401–415 (AGTCGGVLRGTGKQK) are Cytoplasmic-facing. A helical membrane pass occupies residues 416–436 (IGAVLNTIGYYGFGFPIGVSL). Residues 437-443 (MFAAKLG) are Extracellular-facing. The chain crosses the membrane as a helical span at residues 444–464 (IIGLWAGLIVCVSFQAFSYLI). Residues 465-545 (YILRTNWSRV…VGEVLTGRQL (81 aa)) are Cytoplasmic-facing. Residues 546–566 (VFYRGMALTVSVAVLIAGIVV) form a helical membrane-spanning segment. Over 567 to 573 (RVFNDRG) the chain is Extracellular.

It belongs to the multi antimicrobial extrusion (MATE) (TC 2.A.66.1) family. Expressed in testis; especially in testicular Leydig cells.

It localises to the cell membrane. Multidrug efflux pump that functions as a H(+)/organic cation antiporter. May mediate testosterone efflux from the Leydig cells in the testes. The sequence is that of Multidrug and toxin extrusion protein 2 (Slc47a2) from Mus musculus (Mouse).